Consider the following 245-residue polypeptide: 1-(5-phosphoribosyl)-5-[(5-phosphoribosylamino)methylideneamino] imidazole-4-carboxamide isomerase (245 aa).

The active-site Proton acceptor is Asp7. Residue Asp129 is the Proton donor of the active site.

It belongs to the HisA/HisF family.

Its subcellular location is the cytoplasm. The catalysed reaction is 1-(5-phospho-beta-D-ribosyl)-5-[(5-phospho-beta-D-ribosylamino)methylideneamino]imidazole-4-carboxamide = 5-[(5-phospho-1-deoxy-D-ribulos-1-ylimino)methylamino]-1-(5-phospho-beta-D-ribosyl)imidazole-4-carboxamide. Its pathway is amino-acid biosynthesis; L-histidine biosynthesis; L-histidine from 5-phospho-alpha-D-ribose 1-diphosphate: step 4/9. This is 1-(5-phosphoribosyl)-5-[(5-phosphoribosylamino)methylideneamino] imidazole-4-carboxamide isomerase from Tolumonas auensis (strain DSM 9187 / NBRC 110442 / TA 4).